A 576-amino-acid chain; its full sequence is MLGHNIYEEDDAFNPFADSVSPLNPPKTDQEPSAEGVEEESPNVQASPPKTHIYTSPRKRSVNLKSLPFETLTLDSAPLGPLQFSDAPSMAPENNRLEVGLNTKINPLKGSSPALNADFSANKPWISEVNSFSPSPIGATENPTIPNSEQTVDTLDAASSSAPNFTHTVSSASSQKQGSTSLTDTENQKAHPAAAPQSLTPFYIQVHDPHTVKEITKSHTVYSVSTRLEEHNQPSVSNVTVQRRYNDFAFLYQLLSNNHPGCIIPPIPEKQVVGRFDDEFIEQRRAALEVMLRKISAHPVLRDDYSFKLFLEAETFDPRMTHRTTLIESSSSPLRSGPSTSGLLDSFTSAFHTSGSSKFSEQDPILIEAKDTLDSLETQLKSVYHALLLSIDQRIQFASAIHDFGEAVGNLSLVDLEPTLSSKFDGLSQLQVELRFVQERKVAQDNLTLGTTLEEYIRYVESAKNAFTTRQKLWQTWQSSVQAVSRAKTQLEKCKKQAKSQQKSLPYLEEQYEKYRAKAADLEKEFSESTTLLKRDLSSLTTSRVDDLKASVETWLESAIESQKEIIERWESFLDQ.

2 disordered regions span residues 1-60 (MLGH…PRKR) and 156-198 (DAAS…APQS). Position 55 is a phosphothreonine (Thr55). Positions 156–169 (DAASSSAPNFTHTV) are enriched in polar residues. The span at 170–181 (SSASSQKQGSTS) shows a compositional bias: low complexity. A PX domain is found at 200–317 (TPFYIQVHDP…KLFLEAETFD (118 aa)). The a 1,2-diacyl-sn-glycero-3-phospho-(1D-myo-inositol-3-phosphate) site is built by Arg244, Lys270, and Arg284. Residue Ser332 is modified to Phosphoserine.

Belongs to the sorting nexin family. In terms of assembly, component of the retromer complex which consists of vps29, vps26, vps35, vps5 and vps17.

The protein localises to the cytoplasm. Its subcellular location is the golgi apparatus. The protein resides in the membrane. Its function is as follows. Required for efficient sporulation target of PtdIns(3)P in vesicle transport required for onset of the forespore membrane formation. Plays a role in vesicular protein sorting. Required for the endosome-to-Golgi retrieval of the vacuolar protein sorting receptor pep1/vps10. Component of the membrane-associated retromer complex which is essential in endosome-to-Golgi retrograde transport. The vps29-vps26-vps35 subcomplex may be involved in cargo selection. In Schizosaccharomyces pombe (strain 972 / ATCC 24843) (Fission yeast), this protein is Vacuolar protein sorting-associated protein vps5 (vps5).